A 142-amino-acid polypeptide reads, in one-letter code: Type 3 secretion system pilotin (142 aa).

The signal sequence occupies residues methionine 1–glycine 23. Cysteine 24 carries the N-palmitoyl cysteine lipid modification. Cysteine 24 is lipidated: S-diacylglycerol cysteine.

This sequence belongs to the MxiM family. As to quaternary structure, monomer. Interacts with the secretin MxiD/SctC.

It is found in the cell outer membrane. In terms of biological role, involved in the synthesis of the type III secretion system (T3SS), also called injectisome, which is used to inject bacterial effector proteins into eukaryotic host cells. Pilot protein that is required for the proper localization of the secretin MxiD/SctC in the outer membrane. Also influences both MxiD/SctC multimerization and stability. Required for both Ipa translocation and tissue culture cell invasion. Binds lipids. The sequence is that of Type 3 secretion system pilotin from Shigella flexneri.